The primary structure comprises 221 residues: ATP-dependent dethiobiotin synthetase BioD (221 aa).

ATP is bound at residue 11–16 (GVGKTY). Threonine 15 is a binding site for Mg(2+). Residue lysine 36 is part of the active site. Threonine 40 provides a ligand contact to substrate. ATP is bound by residues aspartate 48 and 107-110 (EGAG). Residues aspartate 48 and glutamate 107 each contribute to the Mg(2+) site.

It belongs to the dethiobiotin synthetase family. As to quaternary structure, homodimer. It depends on Mg(2+) as a cofactor.

Its subcellular location is the cytoplasm. It catalyses the reaction (7R,8S)-7,8-diammoniononanoate + CO2 + ATP = (4R,5S)-dethiobiotin + ADP + phosphate + 3 H(+). It functions in the pathway cofactor biosynthesis; biotin biosynthesis; biotin from 7,8-diaminononanoate: step 1/2. Its function is as follows. Catalyzes a mechanistically unusual reaction, the ATP-dependent insertion of CO2 between the N7 and N8 nitrogen atoms of 7,8-diaminopelargonic acid (DAPA, also called 7,8-diammoniononanoate) to form a ureido ring. The sequence is that of ATP-dependent dethiobiotin synthetase BioD from Hydrogenobaculum sp. (strain Y04AAS1).